The sequence spans 147 residues: UPF0178 protein VIBHAR_03247 (147 aa).

This sequence belongs to the UPF0178 family.

This is UPF0178 protein VIBHAR_03247 from Vibrio campbellii (strain ATCC BAA-1116).